Reading from the N-terminus, the 63-residue chain is Arabinogalactan peptide 3 (63 aa).

A signal peptide spans 1-26 (MASRILYAAAVVAAVAVSSLAGVAYA). S36 is lipidated: GPI-anchor amidated serine. The propeptide at 37 to 63 (GAAAVSSSLVAAVLCPAVALLLGNLRQ) is removed in mature form.

Belongs to the AG-peptide AGP family. O-glycosylated on hydroxyprolines; noncontiguous hydroxylproline residues are glycosylated with arabinogalactan. In terms of tissue distribution, expressed in roots, stems, leaves, flowers and seeds.

It is found in the vacuole. It localises to the aleurone grain membrane. Proteoglycan that seems to be implicated in diverse developmental roles such as differentiation, cell-cell recognition, embryogenesis and programmed cell death. This is Arabinogalactan peptide 3 (AGPEP3) from Oryza sativa subsp. japonica (Rice).